The chain runs to 1356 residues: Transmembrane protein 94 (1356 aa).

The Cytoplasmic segment spans residues 1–64; that stretch reads MDLKEKHLGE…FLHHSNRCSC (64 aa). The chain crosses the membrane as a helical span at residues 65 to 85; sequence FHWPGASLMLLAVLLLLGCCG. The Lumenal segment spans residues 86 to 92; the sequence is GQPAGSR. The helical transmembrane segment at 93–113 threads the bilayer; the sequence is GVGLVNASALFLLLLLNLVLI. At 114–273 the chain is on the cytoplasmic side; that stretch reads GRQDRLKRRE…RPVTALDNER (160 aa). Serine 221 and serine 225 each carry phosphoserine. A helical transmembrane segment spans residues 274–294; sequence FTVQSVMLHYAVPVVLAGFLI. Over 295–320 the chain is Lumenal; sequence TNALRFIFSAPGVTSWQYTLLQLQVN. A helical membrane pass occupies residues 321 to 341; the sequence is GVLPILPLLFPVLWVLATACG. The Cytoplasmic segment spans residues 342–1092; that stretch reads EARVLAQMSK…RHATYGIRKC (751 aa). The short motif at 417–422 is the DKQGIL element; that stretch reads DKQGIL. Disordered stretches follow at residues 439 to 461 and 483 to 541; these read VEPP…FCHP and EQER…ESDP. A compositionally biased stretch (basic and acidic residues) spans 440 to 449; that stretch reads EPPHSSHEDL. Residues serine 444, serine 445, and serine 454 each carry the phosphoserine modification. Positions 502 to 511 are enriched in basic residues; it reads HHKAHGRSKH. Serine 513, serine 518, serine 798, and serine 941 each carry phosphoserine. The helical transmembrane segment at 1093 to 1113 threads the bilayer; that stretch reads FLFLLQCQLTLVVIQFLSCLV. At 1114–1120 the chain is on the lumenal side; the sequence is QLPPLLS. A helical transmembrane segment spans residues 1121–1141; that stretch reads TTDILWLSCFCYPLLSISLLG. The Cytoplasmic portion of the chain corresponds to 1142-1167; sequence KPPHSSIMSMATGKNLQSIPKKTQHY. The chain crosses the membrane as a helical span at residues 1168–1188; the sequence is FLLCFLLKFSLTISSCLICFG. Topologically, residues 1189–1228 are lumenal; that stretch reads FTLQSFCDSSRDRNLTNCSSVMLPSNDDRAPAWFEDFANG. 2 N-linked (GlcNAc...) asparagine glycosylation sites follow: asparagine 1202 and asparagine 1205. Residues 1229-1249 form a helical membrane-spanning segment; the sequence is LLSAQKLTAALIVLHTVFISI. At 1250 to 1261 the chain is on the cytoplasmic side; sequence THVHRTKPLWRK. A helical membrane pass occupies residues 1262-1282; that stretch reads SPLTNLWWAVTVPVVLLGQVV. The Lumenal portion of the chain corresponds to 1283–1306; sequence QTAVDLQLWTHRDSHVHFGLEDVP. A helical membrane pass occupies residues 1307 to 1327; that stretch reads LLTWLLGCLSLVLVVVTNEIV. Residues 1328–1356 lie on the Cytoplasmic side of the membrane; that stretch reads KLHEIRVRVRYQKRQKLQFETKLGMNSPF. The GMN; metal-binding motif motif lies at 1351–1353; sequence GMN.

In terms of assembly, forms homooligomers. Expressed ubiquitously.

It localises to the endoplasmic reticulum membrane. In terms of biological role, could function in the uptake of Mg(2+) from the cytosol into the endoplasmic reticulum and regulate intracellular Mg(2+) homeostasis. In Homo sapiens (Human), this protein is Transmembrane protein 94.